The following is a 363-amino-acid chain: Protein arginine N-methyltransferase 2 (363 aa).

2 ANK repeats span residues 22-46 and 48-80; these read AAQT…FQDD and LGWS…AVDK. Positions 111 to 363 constitute an RMT2 domain; that stretch reads KTSAGDNLVF…RLPIAKMSLI (253 aa). Residues Phe120, 186 to 191, 209 to 211, 236 to 237, and Asp265 each bind S-adenosyl-L-methionine; these read FGLGIV, EAH, and WQ.

The protein belongs to the class I-like SAM-binding methyltransferase superfamily. RMT2 methyltransferase family. As to quaternary structure, monomer.

Its subcellular location is the cytoplasm. It localises to the nucleus. Functionally, S-adenosyl-L-methionine-dependent protein-arginine N-methyltransferase that methylates the delta-nitrogen atom of arginine residues to form N5-methylarginine (type IV) in target proteins. Monomethylates ribosomal protein L12. This is Protein arginine N-methyltransferase 2 from Cryptococcus neoformans var. neoformans serotype D (strain B-3501A) (Filobasidiella neoformans).